A 280-amino-acid polypeptide reads, in one-letter code: Golgi to ER traffic protein 2 (280 aa).

Basic and acidic residues-rich tracts occupy residues 1 to 17 (MSLS…ERRQ), 44 to 62 (SALD…EAVK), and 71 to 80 (AKKESTAQAK). The interval 1–80 (MSLSEAEKRK…AKKESTAQAK (80 aa)) is disordered. Over 1–146 (MSLSEAEKRK…VEYHKYRVNT (146 aa)) the chain is Cytoplasmic. A helical membrane pass occupies residues 147–166 (LTAKTTLVKWIVLLAYIFLL). Over 167–191 (TRTDDTYFPFVVRSYLPEVFTSQSS) the chain is Lumenal. The helical transmembrane segment at 192-211 (FFSIFLTFEILATSIYYQLS) threads the bilayer. Residues 212 to 258 (VGVERETGVKTLQDTSKIVSLVSMVPEGILPIADLRGKVILAMKYWN) are Cytoplasmic-facing. A helical transmembrane segment spans residues 259–279 (IIAMMIGDVCFVLVAIGLVSQ). Position 280 (Ile280) is a topological domain, lumenal.

It belongs to the GET2 family. As to quaternary structure, component of the Golgi to ER traffic (GET) complex, which is composed of GET1, GET2 and GET3. Within the complex, GET1 and GET2 form a heterotetramer which is stabilized by phosphatidylinositol binding and which binds to the GET3 homodimer.

The protein localises to the endoplasmic reticulum membrane. It is found in the golgi apparatus membrane. In terms of biological role, required for the post-translational delivery of tail-anchored (TA) proteins to the endoplasmic reticulum. Together with GET1, acts as a membrane receptor for soluble GET3, which recognizes and selectively binds the transmembrane domain of TA proteins in the cytosol. The GET complex cooperates with the HDEL receptor ERD2 to mediate the ATP-dependent retrieval of resident ER proteins that contain a C-terminal H-D-E-L retention signal from the Golgi to the ER. The polypeptide is Golgi to ER traffic protein 2 (Candida glabrata (strain ATCC 2001 / BCRC 20586 / JCM 3761 / NBRC 0622 / NRRL Y-65 / CBS 138) (Yeast)).